The following is a 127-amino-acid chain: Large ribosomal subunit protein bL19 (127 aa).

The protein belongs to the bacterial ribosomal protein bL19 family.

In terms of biological role, this protein is located at the 30S-50S ribosomal subunit interface and may play a role in the structure and function of the aminoacyl-tRNA binding site. This is Large ribosomal subunit protein bL19 from Synechococcus sp. (strain JA-3-3Ab) (Cyanobacteria bacterium Yellowstone A-Prime).